Reading from the N-terminus, the 314-residue chain is 2-methoxy-6-polyprenyl-1,4-benzoquinol methylase, mitochondrial (314 aa).

A mitochondrion-targeting transit peptide spans M1–R19. S-adenosyl-L-methionine contacts are provided by residues T109, D154, N186 to S187, and S203.

It belongs to the class I-like SAM-binding methyltransferase superfamily. MenG/UbiE family. Component of a multi-subunit COQ enzyme complex.

The protein resides in the mitochondrion inner membrane. The catalysed reaction is a 2-methoxy-6-(all-trans-polyprenyl)benzene-1,4-diol + S-adenosyl-L-methionine = a 5-methoxy-2-methyl-3-(all-trans-polyprenyl)benzene-1,4-diol + S-adenosyl-L-homocysteine + H(+). Its pathway is cofactor biosynthesis; ubiquinone biosynthesis. Functionally, methyltransferase required for the conversion of 2-polyprenyl-6-methoxy-1,4-benzoquinol (DDMQH2) to 2-polyprenyl-3-methyl-6-methoxy-1,4-benzoquinol (DMQH2). In Dictyostelium discoideum (Social amoeba), this protein is 2-methoxy-6-polyprenyl-1,4-benzoquinol methylase, mitochondrial.